The sequence spans 781 residues: Toll-like receptor 2 type-2 (781 aa).

The first 24 residues, 1-24 (MHTWKMWAICTALAAHLPEEQALR), serve as a signal peptide directing secretion. At 25–585 (QACLSCDATQ…QLSLMECHRS (561 aa)) the chain is on the extracellular side. Cysteines 30 and 36 form a disulfide. N-linked (GlcNAc...) asparagine glycosylation is present at N37. 6 LRR repeats span residues 53 to 74 (KITVLNLAHNRIKVIRTHDLQK), 77 to 98 (NLRTLLLQSNQISSIDEDSFGS), 101 to 122 (KLELLDLSNNSLAHLSPVWFGP), 125 to 146 (SLQHLRIQGNSYSDLGESSPFS), 150 to 171 (NLSSLHLGNPQFSIIRQGNFEG), and 174 to 195 (FLNTLRIDGDNLSQYEPGSLKS). N109 carries an N-linked (GlcNAc...) asparagine glycan. N150, N184, N301, and N313 each carry an N-linked (GlcNAc...) asparagine glycan. C350 and C379 are disulfide-bonded. 7 LRR repeats span residues 358–378 (SLEYLDLSANLLGDQSLEHSA), 385–406 (SLQTLNLSQNSLSDLKMTGKSL), 411–432 (NLNLLDISENNFGEIPDMCEWP), 434–455 (NLKYLNLSSTQIPKLTTCIPST), 456–474 (LEVLDVSANNLQDFGLQLP), 475–496 (FLKELYLTKNHLKTLPEATDIP), and 497–518 (NLVAMSISRNKLNSFSKEEFES). N390 carries N-linked (GlcNAc...) asparagine glycosylation. C429 and C451 are oxidised to a cystine. N439 is a glycosylation site (N-linked (GlcNAc...) asparagine). The LRRCT domain maps to 530–584 (NNFICSCEFLSFIHHEAGIAQVLVGWPESYICDSPLTVRGAQVGSVQLSLMECHR). The chain crosses the membrane as a helical span at residues 586 to 606 (LLVSLICTLVFLFILILVVVG). The Cytoplasmic portion of the chain corresponds to 607–781 (YKYHAVWYMR…WENLKAALKS (175 aa)). The 144-residue stretch at 636–779 (ICYDAFVSYS…MFWENLKAAL (144 aa)) folds into the TIR domain.

The protein belongs to the Toll-like receptor family. As to quaternary structure, binds MYD88 (via TIR domain). In terms of processing, N-glycosylated. In terms of tissue distribution, highly expressed in ovary. Also detected in brain, heart, lung, liver, spleen and kidney, and at low levels in gizzard, muscle, testis and proventriculus.

The protein localises to the membrane. Participates in the innate immune response to microbial agents. Acts via MYD88 and TRAF6, leading to NF-kappa-B activation, cytokine secretion and the inflammatory response. Mediates the response to mycoplasmal macrophage-activating lipopeptide-2kD (MALP-2). This Gallus gallus (Chicken) protein is Toll-like receptor 2 type-2 (TLR2-2).